We begin with the raw amino-acid sequence, 773 residues long: Kelch domain-containing protein 7A (773 aa).

The helical transmembrane segment at 23–40 threads the bilayer; sequence VVLSAAALLLVTAAYKLY. Asparagine 61 carries N-linked (GlcNAc...) asparagine glycosylation. Disordered regions lie at residues 64–99 and 114–207; these read EALG…LDYS and SEEA…APNG. The residue at position 89 (serine 89) is a Phosphoserine. Residues 114 to 126 are compositionally biased toward basic and acidic residues; the sequence is SEEATRKGSDESQ. N-linked (GlcNAc...) asparagine glycosylation is present at asparagine 256. A disordered region spans residues 296–355; sequence KADSRPVPCPAALADAPSPGPGPEPLVTGAASRDEAANTAGGGASEAASPQPVASPSAPG. Kelch repeat units follow at residues 323 to 370, 488 to 534, 537 to 585, 586 to 628, and 631 to 673; these read TGAA…ENPE, KRLV…LCTL, YLFV…ALEG, HLYA…ATVC, and EIFV…AVNG. The span at 340–354 shows a compositional bias: low complexity; the sequence is SEAASPQPVASPSAP. The residue at position 361 (serine 361) is a Phosphoserine.

The protein resides in the membrane. In Mus musculus (Mouse), this protein is Kelch domain-containing protein 7A (Klhdc7a).